A 194-amino-acid polypeptide reads, in one-letter code: ATP-dependent Clp protease proteolytic subunit (194 aa).

Ser98 serves as the catalytic Nucleophile. His123 is a catalytic residue.

It belongs to the peptidase S14 family. In terms of assembly, fourteen ClpP subunits assemble into 2 heptameric rings which stack back to back to give a disk-like structure with a central cavity, resembling the structure of eukaryotic proteasomes.

It is found in the cytoplasm. The enzyme catalyses Hydrolysis of proteins to small peptides in the presence of ATP and magnesium. alpha-casein is the usual test substrate. In the absence of ATP, only oligopeptides shorter than five residues are hydrolyzed (such as succinyl-Leu-Tyr-|-NHMec, and Leu-Tyr-Leu-|-Tyr-Trp, in which cleavage of the -Tyr-|-Leu- and -Tyr-|-Trp bonds also occurs).. Its function is as follows. Cleaves peptides in various proteins in a process that requires ATP hydrolysis. Has a chymotrypsin-like activity. Plays a major role in the degradation of misfolded proteins. The polypeptide is ATP-dependent Clp protease proteolytic subunit (Staphylococcus carnosus (strain TM300)).